A 199-amino-acid polypeptide reads, in one-letter code: Ribosomal RNA large subunit methyltransferase E (199 aa).

The S-adenosyl-L-methionine site is built by Gly-53, Trp-55, Asp-73, Asp-92, and Asp-114. Lys-154 functions as the Proton acceptor in the catalytic mechanism.

This sequence belongs to the class I-like SAM-binding methyltransferase superfamily. RNA methyltransferase RlmE family.

The protein resides in the cytoplasm. It catalyses the reaction uridine(2552) in 23S rRNA + S-adenosyl-L-methionine = 2'-O-methyluridine(2552) in 23S rRNA + S-adenosyl-L-homocysteine + H(+). Specifically methylates the uridine in position 2552 of 23S rRNA at the 2'-O position of the ribose in the fully assembled 50S ribosomal subunit. This Treponema denticola (strain ATCC 35405 / DSM 14222 / CIP 103919 / JCM 8153 / KCTC 15104) protein is Ribosomal RNA large subunit methyltransferase E.